A 258-amino-acid chain; its full sequence is 4-hydroxy-2-oxovalerate aldolase (258 aa).

His-48 acts as the Proton acceptor in catalysis. Gln-149 lines the substrate pocket. Glu-151 contacts Mg(2+). Residues Ala-176 and Asp-177 each coordinate substrate. Asp-177 is a binding site for Mg(2+).

Belongs to the HpcH/HpaI aldolase family.

The catalysed reaction is (S)-4-hydroxy-2-oxopentanoate = acetaldehyde + pyruvate. Its pathway is xenobiotic degradation; biphenyl degradation. Catalyzes the reversible retro-aldol cleavage of 4-hydroxy-2-oxovalerate to pyruvate and acetaldehyde. In Rhodococcus jostii (strain RHA1), this protein is 4-hydroxy-2-oxovalerate aldolase (bphF).